The primary structure comprises 179 residues: TM2 domain-containing protein Y66D12A.21 (179 aa).

An N-terminal signal peptide occupies residues 1–18 (MRQLLLTLSLISVSASDA). At 19-82 (TVKCDDLDPN…IFNRTVPSAC (64 aa)) the chain is on the extracellular side. Asn75 carries an N-linked (GlcNAc...) asparagine glycan. The helical transmembrane segment at 83–105 (HYGAHVSYTTTVLLSIFLGFFGI) threads the bilayer. The 48-residue stretch at 88–135 (VSYTTTVLLSIFLGFFGIDRIYLGYYALGLIKMFSLGGLFVFWLVDII) folds into the TM2 domain. Residues 106–109 (DRIY) lie on the Cytoplasmic side of the membrane. The helical transmembrane segment at 110-132 (LGYYALGLIKMFSLGGLFVFWLV) threads the bilayer. The Extracellular portion of the chain corresponds to 133–179 (DIILISLQLLGPADGTAYAMAYYGPKAQMIRFDSHTNFSFYTCDGCL). Asn169 carries N-linked (GlcNAc...) asparagine glycosylation.

The protein belongs to the TM2 family.

It is found in the membrane. The chain is TM2 domain-containing protein Y66D12A.21 from Caenorhabditis elegans.